Consider the following 303-residue polypeptide: Dihydroorotate dehydrogenase B (NAD(+)), catalytic subunit (303 aa).

FMN is bound by residues Ser21 and 45–46 (KG). Residues Lys45 and 69-73 (NSIGL) each bind substrate. Residues Asn99 and Asn127 each coordinate FMN. Position 127 (Asn127) interacts with substrate. Residue Cys130 is the Nucleophile of the active site. 2 residues coordinate FMN: Lys165 and Ile191. Substrate is bound at residue 192 to 193 (NT). Residues Gly217, 243–244 (GG), and 265–266 (GT) contribute to the FMN site.

The protein belongs to the dihydroorotate dehydrogenase family. Type 1 subfamily. In terms of assembly, heterotetramer of 2 PyrK and 2 PyrD type B subunits. It depends on FMN as a cofactor.

It is found in the cytoplasm. The catalysed reaction is (S)-dihydroorotate + NAD(+) = orotate + NADH + H(+). It functions in the pathway pyrimidine metabolism; UMP biosynthesis via de novo pathway; orotate from (S)-dihydroorotate (NAD(+) route): step 1/1. Its function is as follows. Catalyzes the conversion of dihydroorotate to orotate with NAD(+) as electron acceptor. The protein is Dihydroorotate dehydrogenase B (NAD(+)), catalytic subunit (pyrD) of Thermodesulfovibrio yellowstonii (strain ATCC 51303 / DSM 11347 / YP87).